Here is a 175-residue protein sequence, read N- to C-terminus: ATP synthase subunit b, chloroplastic (175 aa).

The chain crosses the membrane as a helical span at residues 21–40 (LLESNVINIIILISLLIYLG).

It belongs to the ATPase B chain family. F-type ATPases have 2 components, F(1) - the catalytic core - and F(0) - the membrane proton channel. F(1) has five subunits: alpha(3), beta(3), gamma(1), delta(1), epsilon(1). F(0) has four main subunits: a(1), b(1), b'(1) and c(10-14). The alpha and beta chains form an alternating ring which encloses part of the gamma chain. F(1) is attached to F(0) by a central stalk formed by the gamma and epsilon chains, while a peripheral stalk is formed by the delta, b and b' chains.

It is found in the plastid. The protein resides in the chloroplast thylakoid membrane. Its function is as follows. F(1)F(0) ATP synthase produces ATP from ADP in the presence of a proton or sodium gradient. F-type ATPases consist of two structural domains, F(1) containing the extramembraneous catalytic core and F(0) containing the membrane proton channel, linked together by a central stalk and a peripheral stalk. During catalysis, ATP synthesis in the catalytic domain of F(1) is coupled via a rotary mechanism of the central stalk subunits to proton translocation. Component of the F(0) channel, it forms part of the peripheral stalk, linking F(1) to F(0). This chain is ATP synthase subunit b, chloroplastic, found in Cyanidium caldarium (Red alga).